Consider the following 122-residue polypeptide: Large ribosomal subunit protein uL24 (122 aa).

The protein belongs to the universal ribosomal protein uL24 family. Part of the 50S ribosomal subunit.

Functionally, one of two assembly initiator proteins, it binds directly to the 5'-end of the 23S rRNA, where it nucleates assembly of the 50S subunit. In terms of biological role, located at the polypeptide exit tunnel on the outside of the subunit. This is Large ribosomal subunit protein uL24 from Pyrobaculum arsenaticum (strain DSM 13514 / JCM 11321 / PZ6).